A 139-amino-acid chain; its full sequence is Small ribosomal subunit protein bS6 (139 aa).

Residues 95-121 (AVTEQSEMLKAEESRNERRERRERPND) are compositionally biased toward basic and acidic residues. The tract at residues 95–139 (AVTEQSEMLKAEESRNERRERRERPNDNAEGADGDDNSDSDNADE) is disordered. Positions 124–139 (EGADGDDNSDSDNADE) are enriched in acidic residues.

Belongs to the bacterial ribosomal protein bS6 family.

Binds together with bS18 to 16S ribosomal RNA. The sequence is that of Small ribosomal subunit protein bS6 from Pseudomonas aeruginosa (strain LESB58).